Reading from the N-terminus, the 330-residue chain is Beta-ketoacyl-[acyl-carrier-protein] synthase III (330 aa).

Residues C115 and H255 contribute to the active site. Residues 256-260 (QANFR) form an ACP-binding region. N285 is an active-site residue.

It belongs to the thiolase-like superfamily. FabH family. In terms of assembly, homodimer.

The protein resides in the cytoplasm. It catalyses the reaction malonyl-[ACP] + acetyl-CoA + H(+) = 3-oxobutanoyl-[ACP] + CO2 + CoA. It participates in lipid metabolism; fatty acid biosynthesis. Its function is as follows. Catalyzes the condensation reaction of fatty acid synthesis by the addition to an acyl acceptor of two carbons from malonyl-ACP. Catalyzes the first condensation reaction which initiates fatty acid synthesis and may therefore play a role in governing the total rate of fatty acid production. Possesses both acetoacetyl-ACP synthase and acetyl transacylase activities. Its substrate specificity determines the biosynthesis of branched-chain and/or straight-chain of fatty acids. The polypeptide is Beta-ketoacyl-[acyl-carrier-protein] synthase III (Helicobacter pylori (strain P12)).